The sequence spans 97 residues: Large ribosomal subunit protein uL23 (97 aa).

This sequence belongs to the universal ribosomal protein uL23 family. As to quaternary structure, part of the 50S ribosomal subunit. Contacts protein L29, and trigger factor when it is bound to the ribosome.

Functionally, one of the early assembly proteins it binds 23S rRNA. One of the proteins that surrounds the polypeptide exit tunnel on the outside of the ribosome. Forms the main docking site for trigger factor binding to the ribosome. In Brachyspira hyodysenteriae (strain ATCC 49526 / WA1), this protein is Large ribosomal subunit protein uL23.